Consider the following 198-residue polypeptide: FMN-dependent NADH:quinone oxidoreductase (198 aa).

FMN-binding positions include serine 10 and 16–18 (SIS).

The protein belongs to the azoreductase type 1 family. Homodimer. Requires FMN as cofactor.

It carries out the reaction 2 a quinone + NADH + H(+) = 2 a 1,4-benzosemiquinone + NAD(+). The enzyme catalyses N,N-dimethyl-1,4-phenylenediamine + anthranilate + 2 NAD(+) = 2-(4-dimethylaminophenyl)diazenylbenzoate + 2 NADH + 2 H(+). Quinone reductase that provides resistance to thiol-specific stress caused by electrophilic quinones. Functionally, also exhibits azoreductase activity. Catalyzes the reductive cleavage of the azo bond in aromatic azo compounds to the corresponding amines. The sequence is that of FMN-dependent NADH:quinone oxidoreductase from Mycoplasmopsis pulmonis (strain UAB CTIP) (Mycoplasma pulmonis).